The sequence spans 504 residues: L-carnitine/gamma-butyrobetaine antiporter (504 aa).

12 helical membrane-spanning segments follow: residues 10–30, 51–71, 92–112, 143–163, 195–215, 231–251, 263–283, 316–336, 347–367, 398–418, 446–466, and 475–495; these read IEPK…WLTV, WGWA…WLVF, IFMM…SIEI, GPLP…FFFV, FYLV…TPLV, LDAI…ACGL, SYLS…SFIM, WTVF…IFLA, LCFG…TVLG, WAAL…CFIA, LLVR…LLAL, and AIIA…LSFI.

Belongs to the BCCT transporter (TC 2.A.15) family. CaiT subfamily. As to quaternary structure, homotrimer.

It is found in the cell inner membrane. The catalysed reaction is 4-(trimethylamino)butanoate(in) + (R)-carnitine(out) = 4-(trimethylamino)butanoate(out) + (R)-carnitine(in). The protein operates within amine and polyamine metabolism; carnitine metabolism. Functionally, catalyzes the exchange of L-carnitine for gamma-butyrobetaine. This chain is L-carnitine/gamma-butyrobetaine antiporter, found in Escherichia coli O8 (strain IAI1).